The primary structure comprises 461 residues: Cysteine--tRNA ligase (461 aa).

Residue cysteine 28 coordinates Zn(2+). The short motif at 30–40 (MTVYDYCHLGH) is the 'HIGH' region element. Zn(2+) contacts are provided by cysteine 212, histidine 237, and glutamate 241. A 'KMSKS' region motif is present at residues 269-273 (KMSKS). Lysine 272 provides a ligand contact to ATP.

It belongs to the class-I aminoacyl-tRNA synthetase family. As to quaternary structure, monomer. The cofactor is Zn(2+).

The protein resides in the cytoplasm. It carries out the reaction tRNA(Cys) + L-cysteine + ATP = L-cysteinyl-tRNA(Cys) + AMP + diphosphate. This chain is Cysteine--tRNA ligase, found in Aromatoleum aromaticum (strain DSM 19018 / LMG 30748 / EbN1) (Azoarcus sp. (strain EbN1)).